A 467-amino-acid polypeptide reads, in one-letter code: Asparagine--tRNA ligase (467 aa).

It belongs to the class-II aminoacyl-tRNA synthetase family. In terms of assembly, homodimer.

The protein resides in the cytoplasm. The catalysed reaction is tRNA(Asn) + L-asparagine + ATP = L-asparaginyl-tRNA(Asn) + AMP + diphosphate + H(+). The polypeptide is Asparagine--tRNA ligase (Bacteroides fragilis (strain ATCC 25285 / DSM 2151 / CCUG 4856 / JCM 11019 / LMG 10263 / NCTC 9343 / Onslow / VPI 2553 / EN-2)).